A 266-amino-acid polypeptide reads, in one-letter code: Imidazole glycerol phosphate synthase subunit HisF (266 aa).

Active-site residues include aspartate 11 and aspartate 130. The interval 134-157 is disordered; that stretch reads RTPEEAARPGPDGAPRGEGWDVYS.

This sequence belongs to the HisA/HisF family. As to quaternary structure, heterodimer of HisH and HisF.

It is found in the cytoplasm. The catalysed reaction is 5-[(5-phospho-1-deoxy-D-ribulos-1-ylimino)methylamino]-1-(5-phospho-beta-D-ribosyl)imidazole-4-carboxamide + L-glutamine = D-erythro-1-(imidazol-4-yl)glycerol 3-phosphate + 5-amino-1-(5-phospho-beta-D-ribosyl)imidazole-4-carboxamide + L-glutamate + H(+). It participates in amino-acid biosynthesis; L-histidine biosynthesis; L-histidine from 5-phospho-alpha-D-ribose 1-diphosphate: step 5/9. In terms of biological role, IGPS catalyzes the conversion of PRFAR and glutamine to IGP, AICAR and glutamate. The HisF subunit catalyzes the cyclization activity that produces IGP and AICAR from PRFAR using the ammonia provided by the HisH subunit. This is Imidazole glycerol phosphate synthase subunit HisF from Paracidovorax citrulli (strain AAC00-1) (Acidovorax citrulli).